The sequence spans 339 residues: Uroporphyrinogen decarboxylase (339 aa).

Substrate-binding positions include 23 to 27 (RQAGR), D72, Y147, T202, and H315.

The protein belongs to the uroporphyrinogen decarboxylase family. As to quaternary structure, homodimer.

It is found in the cytoplasm. The catalysed reaction is uroporphyrinogen III + 4 H(+) = coproporphyrinogen III + 4 CO2. It participates in porphyrin-containing compound metabolism; protoporphyrin-IX biosynthesis; coproporphyrinogen-III from 5-aminolevulinate: step 4/4. In terms of biological role, catalyzes the decarboxylation of four acetate groups of uroporphyrinogen-III to yield coproporphyrinogen-III. The chain is Uroporphyrinogen decarboxylase from Geobacter sp. (strain M21).